Consider the following 225-residue polypeptide: Sugar fermentation stimulation protein homolog (225 aa).

This sequence belongs to the SfsA family.

The polypeptide is Sugar fermentation stimulation protein homolog (Sulfurisphaera tokodaii (strain DSM 16993 / JCM 10545 / NBRC 100140 / 7) (Sulfolobus tokodaii)).